Reading from the N-terminus, the 339-residue chain is Uroporphyrinogen decarboxylase (339 aa).

Substrate contacts are provided by residues 21–25, D71, Y147, S202, and H315; that span reads RQAGR.

Belongs to the uroporphyrinogen decarboxylase family. In terms of assembly, homodimer.

The protein localises to the cytoplasm. It catalyses the reaction uroporphyrinogen III + 4 H(+) = coproporphyrinogen III + 4 CO2. It functions in the pathway porphyrin-containing compound metabolism; protoporphyrin-IX biosynthesis; coproporphyrinogen-III from 5-aminolevulinate: step 4/4. Functionally, catalyzes the decarboxylation of four acetate groups of uroporphyrinogen-III to yield coproporphyrinogen-III. The sequence is that of Uroporphyrinogen decarboxylase from Helicobacter pylori (strain Shi470).